A 150-amino-acid polypeptide reads, in one-letter code: Large ribosomal subunit protein bL9 (150 aa).

Belongs to the bacterial ribosomal protein bL9 family.

Binds to the 23S rRNA. The sequence is that of Large ribosomal subunit protein bL9 from Verminephrobacter eiseniae (strain EF01-2).